A 400-amino-acid chain; its full sequence is CCA-adding enzyme (400 aa).

Residues Gly-28 and Arg-31 each contribute to the ATP site. The CTP site is built by Gly-28 and Arg-31. Residues Asp-41 and Asp-43 each contribute to the Mg(2+) site. Positions 112, 155, 158, 161, and 164 each coordinate ATP. 5 residues coordinate CTP: Arg-112, Asp-155, Arg-158, Arg-161, and Arg-164.

The protein belongs to the tRNA nucleotidyltransferase/poly(A) polymerase family. Bacterial CCA-adding enzyme type 3 subfamily. Homodimer. The cofactor is Mg(2+).

The catalysed reaction is a tRNA precursor + 2 CTP + ATP = a tRNA with a 3' CCA end + 3 diphosphate. It catalyses the reaction a tRNA with a 3' CCA end + 2 CTP + ATP = a tRNA with a 3' CCACCA end + 3 diphosphate. Its function is as follows. Catalyzes the addition and repair of the essential 3'-terminal CCA sequence in tRNAs without using a nucleic acid template. Adds these three nucleotides in the order of C, C, and A to the tRNA nucleotide-73, using CTP and ATP as substrates and producing inorganic pyrophosphate. tRNA 3'-terminal CCA addition is required both for tRNA processing and repair. Also involved in tRNA surveillance by mediating tandem CCA addition to generate a CCACCA at the 3' terminus of unstable tRNAs. While stable tRNAs receive only 3'-terminal CCA, unstable tRNAs are marked with CCACCA and rapidly degraded. This is CCA-adding enzyme from Staphylococcus haemolyticus (strain JCSC1435).